The primary structure comprises 502 residues: Glycerol kinase (502 aa).

ADP is bound at residue threonine 14. The ATP site is built by threonine 14, threonine 15, and serine 16. Threonine 14 contributes to the sn-glycerol 3-phosphate binding site. Position 18 (arginine 18) interacts with ADP. Positions 84, 85, 136, and 246 each coordinate sn-glycerol 3-phosphate. Residues arginine 84, glutamate 85, tyrosine 136, aspartate 246, and glutamine 247 each coordinate glycerol. Residues threonine 268 and glycine 311 each contribute to the ADP site. Residues threonine 268, glycine 311, glutamine 315, and glycine 412 each contribute to the ATP site. The ADP site is built by glycine 412 and asparagine 416.

The protein belongs to the FGGY kinase family. Homotetramer and homodimer (in equilibrium). Heterodimer with EIIA-Glc. Binds 1 zinc ion per glycerol kinase EIIA-Glc dimer. The zinc ion is important for dimerization.

The enzyme catalyses glycerol + ATP = sn-glycerol 3-phosphate + ADP + H(+). It functions in the pathway polyol metabolism; glycerol degradation via glycerol kinase pathway; sn-glycerol 3-phosphate from glycerol: step 1/1. Its activity is regulated as follows. Activity of this regulatory enzyme is affected by several metabolites. Allosterically and non-competitively inhibited by fructose 1,6-bisphosphate (FBP) and unphosphorylated phosphocarrier protein EIIA-Glc (III-Glc), an integral component of the bacterial phosphotransferase (PTS) system. Its function is as follows. Key enzyme in the regulation of glycerol uptake and metabolism. Catalyzes the phosphorylation of glycerol to yield sn-glycerol 3-phosphate. The sequence is that of Glycerol kinase from Escherichia coli (strain ATCC 8739 / DSM 1576 / NBRC 3972 / NCIMB 8545 / WDCM 00012 / Crooks).